The primary structure comprises 49 residues: Small, acid-soluble spore protein O (49 aa).

The segment at 1 to 49 (MGKRKANHTISGMNAASAQGQGTGYNEEFANEPFTPAERQNNKKRKKNQ) is disordered. Residues 8 to 20 (HTISGMNAASAQG) are compositionally biased toward polar residues.

Belongs to the SspO family.

Its subcellular location is the spore core. This chain is Small, acid-soluble spore protein O, found in Bacillus cereus (strain ATCC 14579 / DSM 31 / CCUG 7414 / JCM 2152 / NBRC 15305 / NCIMB 9373 / NCTC 2599 / NRRL B-3711).